A 184-amino-acid chain; its full sequence is Ribosome-recycling factor (184 aa).

This sequence belongs to the RRF family.

The protein localises to the cytoplasm. In terms of biological role, responsible for the release of ribosomes from messenger RNA at the termination of protein biosynthesis. May increase the efficiency of translation by recycling ribosomes from one round of translation to another. This chain is Ribosome-recycling factor, found in Caldicellulosiruptor saccharolyticus (strain ATCC 43494 / DSM 8903 / Tp8T 6331).